A 1190-amino-acid polypeptide reads, in one-letter code: Pumilio homolog 1 (1190 aa).

Disordered regions lie at residues 38-74 (LTSG…GVAG), 491-531 (SNSA…QQTD), 611-675 (ANGP…NSSL), and 744-777 (GPVG…LNLG). Low complexity-rich tracts occupy residues 491–508 (SNSA…GQQQ), 518–531 (PLTP…QQTD), 628–675 (QQPQ…NSSL), and 765–777 (LSSH…LNLG). In terms of domain architecture, PUM-HD spans 830–1172 (GRSRLLEDFR…HILAKLEKYY (343 aa)). 8 Pumilio repeats span residues 850–885 (EIAG…LVFN), 886–921 (EILQ…ALAE), 922–959 (RIRG…EMVR), 960–995 (ELDG…FIID), 996–1031 (AFKS…PILE), 1032–1067 (ELHQ…KIVA), 1068–1103 (EIRG…MLID), and 1107–1146 (TMND…IVMH). The tract at residues 865–869 (SRFIQ) is adenine-nucleotide binding in RNA target. Residues 901–905 (NYVIQ) form a uracil-nucleotide binding in RNA target region. The interval 937–941 (CRVIQ) is adenine-nucleotide binding in RNA target. The interval 975 to 979 (NHVVQ) is non-specific-nucleotide binding in RNA target. The segment at 1011–1015 (CRVIQ) is adenine-nucleotide binding in RNA target. Positions 1047–1051 (NYVIQ) are uracil-nucleotide binding in RNA target. Positions 1083-1087 (SNVVE) are guanine-nucleotide binding in RNA target. Positions 1126-1130 (NYVVQ) are uracil-nucleotide binding in RNA target.

In terms of assembly, interacts with cpeb1-a; interacts with unphosphorylated cpeb1-a but not phosphorylated. Component of a complex with papd4, sympk, tacc3, parn, dazl and cpeb1. In terms of processing, phosphorylated. Phosphorylation takes place at the time of dissociation of cpeb1-a from pum1 and the translational activation of ccnb1 mRNA. Present in oocytes (at protein level).

The protein localises to the cytoplasm. The protein resides in the P-body. It is found in the cytoplasmic granule. In terms of biological role, sequence-specific RNA-binding protein that acts as a post-transcriptional repressor by binding the 3'-UTR of mRNA targets. Binds to an RNA consensus sequence, the Pumilio Response Element (PRE), 5'-UGUANAUA-3', that is related to the Nanos Response Element (NRE). Mediates post-transcriptional repression of transcripts via different mechanisms: acts via direct recruitment of deadenylase complexes leading to translational inhibition and mRNA degradation. Also mediates deadenylation-independent repression by promoting accessibility of miRNAs. Acts as a post-transcriptional repressor of ccnb1 mRNA during oocyte maturation. This Xenopus laevis (African clawed frog) protein is Pumilio homolog 1.